We begin with the raw amino-acid sequence, 508 residues long: Photosystem II CP47 reaction center protein (508 aa).

6 helical membrane passes run 21-36 (SVHI…WAGS), 101-115 (IVFS…IWHW), 140-156 (GIHL…FGAF), 203-218 (IAAG…FHLS), 237-252 (VLSS…AFVV), and 457-472 (SFAL…HGAR).

The protein belongs to the PsbB/PsbC family. PsbB subfamily. In terms of assembly, PSII is composed of 1 copy each of membrane proteins PsbA, PsbB, PsbC, PsbD, PsbE, PsbF, PsbH, PsbI, PsbJ, PsbK, PsbL, PsbM, PsbT, PsbX, PsbY, PsbZ, Psb30/Ycf12, at least 3 peripheral proteins of the oxygen-evolving complex and a large number of cofactors. It forms dimeric complexes. Requires Binds multiple chlorophylls. PSII binds additional chlorophylls, carotenoids and specific lipids. as cofactor.

It localises to the plastid. It is found in the chloroplast thylakoid membrane. Functionally, one of the components of the core complex of photosystem II (PSII). It binds chlorophyll and helps catalyze the primary light-induced photochemical processes of PSII. PSII is a light-driven water:plastoquinone oxidoreductase, using light energy to abstract electrons from H(2)O, generating O(2) and a proton gradient subsequently used for ATP formation. The protein is Photosystem II CP47 reaction center protein of Acorus calamus var. americanus (American sweet flag).